A 147-amino-acid polypeptide reads, in one-letter code: Cystatin-9-like (147 aa).

Residues 1-28 (MLGLPWKGGLSWALLLLLLGSQILLIYA) form the signal peptide. Cys98 and Cys108 are joined by a disulfide. N-linked (GlcNAc...) asparagine glycans are attached at residues Asn117 and Asn139. Cys122 and Cys142 are joined by a disulfide.

It belongs to the cystatin family. Specifically expressed in testis.

The protein resides in the secreted. The chain is Cystatin-9-like (CST9L) from Homo sapiens (Human).